A 325-amino-acid polypeptide reads, in one-letter code: NADH-quinone oxidoreductase subunit H (325 aa).

The next 8 membrane-spanning stretches (helical) occupy residues 11-31 (ILLT…CGAF), 81-101 (VIFT…FAIV), 114-134 (IGIL…LFAG), 154-174 (LSYE…AGSF), 186-206 (VWNV…GVAV), 237-257 (FFVG…TLFF), 265-285 (LPPF…FILI), and 304-324 (ICLP…LWQA).

It belongs to the complex I subunit 1 family. NDH-1 is composed of 13 different subunits. Subunits NuoA, H, J, K, L, M, N constitute the membrane sector of the complex.

The protein resides in the cell inner membrane. It carries out the reaction a quinone + NADH + 5 H(+)(in) = a quinol + NAD(+) + 4 H(+)(out). In terms of biological role, NDH-1 shuttles electrons from NADH, via FMN and iron-sulfur (Fe-S) centers, to quinones in the respiratory chain. The immediate electron acceptor for the enzyme in this species is believed to be ubiquinone. Couples the redox reaction to proton translocation (for every two electrons transferred, four hydrogen ions are translocated across the cytoplasmic membrane), and thus conserves the redox energy in a proton gradient. This subunit may bind ubiquinone. The polypeptide is NADH-quinone oxidoreductase subunit H (Escherichia coli O139:H28 (strain E24377A / ETEC)).